Here is a 228-residue protein sequence, read N- to C-terminus: UPF0758 protein H16_A3033 (228 aa).

Residues 102-224 (GFDGPAAVRN…IRSLADCCDR (123 aa)) enclose the MPN domain. Zn(2+) is bound by residues H173, H175, and D186. The short motif at 173–186 (HNHPRGTTAPSQSD) is the JAMM motif element.

This sequence belongs to the UPF0758 family.

This Cupriavidus necator (strain ATCC 17699 / DSM 428 / KCTC 22496 / NCIMB 10442 / H16 / Stanier 337) (Ralstonia eutropha) protein is UPF0758 protein H16_A3033.